A 227-amino-acid chain; its full sequence is 2-phospho-L-lactate guanylyltransferase (227 aa).

This sequence belongs to the CofC family. Homodimer.

The catalysed reaction is (2S)-2-phospholactate + GTP + H(+) = (2S)-lactyl-2-diphospho-5'-guanosine + diphosphate. It participates in cofactor biosynthesis; coenzyme F420 biosynthesis. Functionally, guanylyltransferase that catalyzes the activation of (2S)-2-phospholactate (2-PL) as (2S)-lactyl-2-diphospho-5'-guanosine, via the condensation of 2-PL with GTP. It is involved in the biosynthesis of coenzyme F420, a hydride carrier cofactor. In Methanocaldococcus sp. (strain FS406-22), this protein is 2-phospho-L-lactate guanylyltransferase.